The primary structure comprises 333 residues: Phosphate acyltransferase (333 aa).

It belongs to the PlsX family. In terms of assembly, homodimer. Probably interacts with PlsY.

Its subcellular location is the cytoplasm. It catalyses the reaction a fatty acyl-[ACP] + phosphate = an acyl phosphate + holo-[ACP]. The protein operates within lipid metabolism; phospholipid metabolism. In terms of biological role, catalyzes the reversible formation of acyl-phosphate (acyl-PO(4)) from acyl-[acyl-carrier-protein] (acyl-ACP). This enzyme utilizes acyl-ACP as fatty acyl donor, but not acyl-CoA. The sequence is that of Phosphate acyltransferase from Lactobacillus acidophilus (strain ATCC 700396 / NCK56 / N2 / NCFM).